Reading from the N-terminus, the 96-residue chain is Small ribosomal subunit protein bS6 (96 aa).

Belongs to the bacterial ribosomal protein bS6 family.

In terms of biological role, binds together with bS18 to 16S ribosomal RNA. This is Small ribosomal subunit protein bS6 from Salinispora arenicola (strain CNS-205).